Consider the following 106-residue polypeptide: uORF protein (106 aa).

Residues 1 to 19 are compositionally biased toward basic and acidic residues; that stretch reads MDLETRVSGHEKPQRRNPE. Positions 1 to 31 are disordered; sequence MDLETRVSGHEKPQRRNPEDPDCQYAKTRSS.

It is found in the host cytoplasm. Its subcellular location is the host cytoskeleton. Its function is as follows. Plays a role in viral replication. This is uORF protein from Zika virus (ZIKV).